The chain runs to 253 residues: CD151 antigen (253 aa).

At 1-18 (MGEFNEKKTTCGTVCLKY) the chain is on the cytoplasmic side. S-palmitoyl cysteine attachment occurs at residues C11 and C15. The helical transmembrane segment at 19 to 39 (LLFTYNCCFWLAGLAVMAVGI) threads the bilayer. Residues 40-57 (WTLALKSDYISLLASGTY) lie on the Extracellular side of the membrane. The helical transmembrane segment at 58 to 78 (LATAYILVVAGTVVMVTGVLG) threads the bilayer. Topologically, residues 79–91 (CCATFKERRNLLR) are cytoplasmic. A helical membrane pass occupies residues 92 to 112 (LYFILLLIIFLLEIIAGILAY). The Extracellular portion of the chain corresponds to 113 to 221 (AYYQQLNTEL…LETFIQEHLR (109 aa)). Residue N159 is glycosylated (N-linked (GlcNAc...) asparagine). The chain crosses the membrane as a helical span at residues 222–242 (VIGAVGIGIACVQVFGMIFTC). 2 S-palmitoyl cysteine lipidation sites follow: C242 and C243. Residues 243-253 (CLYRSLKLEHY) are Cytoplasmic-facing.

The protein belongs to the tetraspanin (TM4SF) family. As to quaternary structure, interacts with integrins ITGA3:ITGB1, ITGA5:ITGB1, ITGA3:ITGB1 and ITGA6:ITGB4 and with CD9 and CD181. Interacts (via the second extracellular domain) with integrin ITGAV:ITGB3. Interacts with ITGA3; this interaction modulates ITGA3 glycosylation pattern. Interacts with F11R. Interacts with RAC1 and CDC42; these interactions mediate physical association of RAC1 and CDC42 with integrin adhesion receptor complexes. Post-translationally, palmitoylated. Palmitoylation by ZDHHC2 regulates CD151 expression, association with other tetraspanin family proteins and function in cell adhesion. In terms of processing, ubiquitinated by RNF128 on lysine residues present in the tetraspanin amino terminus via 'Lys-48'-linked ubiquitin leading to proteasomal degradation. As to expression, expressed in a variety of tissues including vascular endothelium and epidermis. Expressed on erythroid cells, with a higher level of expression in erythroid precursors than on mature erythrocytes. Acts as a sensitive T-cell activation marker.

The protein localises to the cell membrane. Its function is as follows. Structural component of specialized membrane microdomains known as tetraspanin-enriched microdomains (TERMs), which act as platforms for receptor clustering and signaling. Plays a role in various cellular and molecular mechanism through its association with both integrin and non-integrin proteins. These interactions facilitate critical cellular functions, including cell-to-cell communication, wound healing, platelet aggregation, trafficking, cell motility, and angiogenesis. Via interaction with JAM-A/F11R and integrin ITGA3:ITGB1, promotes the recruitment of signaling molecules such as RAC1, CDC42 and RhoGTPases to facilitate the polarization of epithelial cells and the reorganization of the actin cytoskeleton, which are critical steps in cell migration process. Regulates the glycosylation pattern of ITGA3:ITGB1 thereby modulating its activity. Plays an essential role in the maintenance of central laminin-binding integrin ITGA6:ITGB4-containing adhesion complexes. Essential for the proper assembly of the glomerular and tubular basement membranes in kidney. Contributes to T-cell activation by modulating integrin signaling leading to activation of downstream targets PTK2 and MAPK1/MAPK3. In terms of biological role, (Microbial infection) Plays a role in human papillomavirus 16/HPV-16 endocytosis upon binding to cell surface receptor. (Microbial infection) Plays a role in human cytomegalovirus entry into host cell by contributing to entry receptor binding, membrane fusion, or release of the capsid. In Homo sapiens (Human), this protein is CD151 antigen (CD151).